Consider the following 333-residue polypeptide: GTP 3',8-cyclase (333 aa).

Residues 7-221 (KFGRVHDYIR…FEACNEAGYE (215 aa)) form the Radical SAM core domain. Arg16 serves as a coordination point for GTP. [4Fe-4S] cluster is bound by residues Cys23 and Cys27. S-adenosyl-L-methionine is bound at residue Tyr29. Cys30 contacts [4Fe-4S] cluster. A GTP-binding site is contributed by Arg66. Gly70 contributes to the S-adenosyl-L-methionine binding site. Thr97 contributes to the GTP binding site. An S-adenosyl-L-methionine-binding site is contributed by Ser121. Lys158 serves as a coordination point for GTP. Met192 serves as a coordination point for S-adenosyl-L-methionine. [4Fe-4S] cluster is bound by residues Cys257 and Cys260. 262 to 264 (RLR) contacts GTP. Cys274 contacts [4Fe-4S] cluster.

The protein belongs to the radical SAM superfamily. MoaA family. In terms of assembly, monomer and homodimer. [4Fe-4S] cluster serves as cofactor.

It carries out the reaction GTP + AH2 + S-adenosyl-L-methionine = (8S)-3',8-cyclo-7,8-dihydroguanosine 5'-triphosphate + 5'-deoxyadenosine + L-methionine + A + H(+). It functions in the pathway cofactor biosynthesis; molybdopterin biosynthesis. Functionally, catalyzes the cyclization of GTP to (8S)-3',8-cyclo-7,8-dihydroguanosine 5'-triphosphate. The sequence is that of GTP 3',8-cyclase from Listeria monocytogenes serovar 1/2a (strain ATCC BAA-679 / EGD-e).